The chain runs to 600 residues: DNA polymerase alpha subunit B (600 aa).

The interval A112 to R167 is disordered. A compositionally biased stretch (polar residues) spans S125–R140. S126 is subject to Phosphoserine. Phosphothreonine occurs at positions 127 and 130. A phosphoserine mark is found at S141, S147, S152, and S154. Low complexity predominate over residues S141–S158.

Belongs to the DNA polymerase alpha subunit B family. In terms of assembly, component of the alpha DNA polymerase complex (also known as the alpha DNA polymerase-primase complex) consisting of four subunits: the catalytic subunit POLA1, the regulatory subunit POLA2, and the primase complex subunits PRIM1 and PRIM2 respectively. Within the complex, POLA1 directly interacts with PRIM2. Phosphorylated in a cell cycle-dependent manner, in G2/M phase.

The protein resides in the nucleus. Its function is as follows. Accessory subunit of the DNA polymerase alpha complex (also known as the alpha DNA polymerase-primase complex) which plays an essential role in the initiation of DNA synthesis. During the S phase of the cell cycle, the DNA polymerase alpha complex (composed of a catalytic subunit POLA1, an accessory subunit POLA2 and two primase subunits, the catalytic subunit PRIM1 and the regulatory subunit PRIM2) is recruited to DNA at the replicative forks via direct interactions with MCM10 and WDHD1. The primase subunit of the polymerase alpha complex initiates DNA synthesis by oligomerising short RNA primers on both leading and lagging strands. These primers are initially extended by the polymerase alpha catalytic subunit and subsequently transferred to polymerase delta and polymerase epsilon for processive synthesis on the lagging and leading strand, respectively. This chain is DNA polymerase alpha subunit B (Pola2), found in Rattus norvegicus (Rat).